Here is a 107-residue protein sequence, read N- to C-terminus: Large ribosomal subunit protein uL24 (107 aa).

The protein belongs to the universal ribosomal protein uL24 family. As to quaternary structure, part of the 50S ribosomal subunit.

Functionally, one of two assembly initiator proteins, it binds directly to the 5'-end of the 23S rRNA, where it nucleates assembly of the 50S subunit. In terms of biological role, one of the proteins that surrounds the polypeptide exit tunnel on the outside of the subunit. The protein is Large ribosomal subunit protein uL24 of Mesomycoplasma hyopneumoniae (strain 7448) (Mycoplasma hyopneumoniae).